An 82-amino-acid polypeptide reads, in one-letter code: Small ribosomal subunit protein bS18 (82 aa).

Positions M1–C20 are disordered.

It belongs to the bacterial ribosomal protein bS18 family. As to quaternary structure, part of the 30S ribosomal subunit. Forms a tight heterodimer with protein bS6.

Functionally, binds as a heterodimer with protein bS6 to the central domain of the 16S rRNA, where it helps stabilize the platform of the 30S subunit. The sequence is that of Small ribosomal subunit protein bS18 from Mesorhizobium japonicum (strain LMG 29417 / CECT 9101 / MAFF 303099) (Mesorhizobium loti (strain MAFF 303099)).